A 288-amino-acid chain; its full sequence is Elongation factor Ts (288 aa).

The interval 82 to 85 (TDFV) is involved in Mg(2+) ion dislocation from EF-Tu.

The protein belongs to the EF-Ts family.

The protein localises to the cytoplasm. Functionally, associates with the EF-Tu.GDP complex and induces the exchange of GDP to GTP. It remains bound to the aminoacyl-tRNA.EF-Tu.GTP complex up to the GTP hydrolysis stage on the ribosome. The sequence is that of Elongation factor Ts from Chlorobaculum tepidum (strain ATCC 49652 / DSM 12025 / NBRC 103806 / TLS) (Chlorobium tepidum).